The primary structure comprises 356 residues: Uroporphyrinogen decarboxylase (356 aa).

Residues 27 to 31 (RQAGR), Asp77, Tyr154, Thr209, and His327 contribute to the substrate site.

It belongs to the uroporphyrinogen decarboxylase family. Homodimer.

The protein resides in the cytoplasm. It catalyses the reaction uroporphyrinogen III + 4 H(+) = coproporphyrinogen III + 4 CO2. It functions in the pathway porphyrin-containing compound metabolism; protoporphyrin-IX biosynthesis; coproporphyrinogen-III from 5-aminolevulinate: step 4/4. Its function is as follows. Catalyzes the decarboxylation of four acetate groups of uroporphyrinogen-III to yield coproporphyrinogen-III. The chain is Uroporphyrinogen decarboxylase from Hamiltonella defensa subsp. Acyrthosiphon pisum (strain 5AT).